Here is a 400-residue protein sequence, read N- to C-terminus: Chalcone synthase C2 (400 aa).

Residue Cys-168 is part of the active site.

The protein belongs to the thiolase-like superfamily. Chalcone/stilbene synthases family.

It catalyses the reaction (E)-4-coumaroyl-CoA + 3 malonyl-CoA + 3 H(+) = 2',4,4',6'-tetrahydroxychalcone + 3 CO2 + 4 CoA. It functions in the pathway secondary metabolite biosynthesis; flavonoid biosynthesis. In terms of biological role, the primary product of this enzyme is 4,2',4',6'-tetrahydroxychalcone (also termed naringenin-chalcone or chalcone) which can under specific conditions spontaneously isomerize into naringenin. This is Chalcone synthase C2 (C2) from Zea mays (Maize).